Here is a 427-residue protein sequence, read N- to C-terminus: Mannosylglucosylglycerate synthase (427 aa).

Belongs to the glycosyltransferase group 1 family. The cofactor is Co(2+). Requires Mg(2+) as cofactor. It depends on Mn(2+) as a cofactor. Ni(2+) serves as cofactor.

The catalysed reaction is (2R)-2-O-(alpha-D-glucopyranosyl)-glycerate + GDP-alpha-D-mannose = (2R)-2-O-[alpha-D-mannopyranosyl-(1-&gt;2)-alpha-D-glucopyranosyl]-glycerate + GDP + H(+). Catalyzes the synthesis of mannosylglucosylglycerate (MGG) from glucosylglycerate (GG) and GDP-mannose. This chain is Mannosylglucosylglycerate synthase, found in Thermotoga maritima (strain ATCC 43589 / DSM 3109 / JCM 10099 / NBRC 100826 / MSB8).